Reading from the N-terminus, the 466-residue chain is Adenylosuccinate lyase (466 aa).

Residues 21–22 (RY), 97–99 (NHD), and 130–131 (TS) contribute to the substrate site. The active-site Proton donor/acceptor is the His-180. Gln-259 is a substrate binding site. Catalysis depends on Ser-307, which acts as the Proton donor/acceptor. Arg-347, Ser-352, and Arg-356 together coordinate substrate.

Belongs to the lyase 1 family. Adenylosuccinate lyase subfamily. Homotetramer. Residues from neighboring subunits contribute catalytic and substrate-binding residues to each active site.

It carries out the reaction N(6)-(1,2-dicarboxyethyl)-AMP = fumarate + AMP. The catalysed reaction is (2S)-2-[5-amino-1-(5-phospho-beta-D-ribosyl)imidazole-4-carboxamido]succinate = 5-amino-1-(5-phospho-beta-D-ribosyl)imidazole-4-carboxamide + fumarate. The protein operates within purine metabolism; AMP biosynthesis via de novo pathway; AMP from IMP: step 2/2. It functions in the pathway purine metabolism; IMP biosynthesis via de novo pathway; 5-amino-1-(5-phospho-D-ribosyl)imidazole-4-carboxamide from 5-amino-1-(5-phospho-D-ribosyl)imidazole-4-carboxylate: step 2/2. The chain is Adenylosuccinate lyase (purB) from Dictyostelium discoideum (Social amoeba).